We begin with the raw amino-acid sequence, 146 residues long: MRNEMHLQFSALSQNESFARVTVAAFVAQLDPTMDELTEIKTVVSEAVTNAIIHGYNNDPNGIVYISVVIEDGVVHLTIKDEGVGIANIEEARQPLFTTKPELERSGMGFTIMENFMDEVVVQSEVNKGTTVYLKKYITKSKALCN.

This sequence belongs to the anti-sigma-factor family.

The catalysed reaction is L-seryl-[protein] + ATP = O-phospho-L-seryl-[protein] + ADP + H(+). The enzyme catalyses L-threonyl-[protein] + ATP = O-phospho-L-threonyl-[protein] + ADP + H(+). Its function is as follows. Binds to sigma F and blocks its ability to form an RNA polymerase holoenzyme (E-sigma F). Phosphorylates SpoIIAA on a serine residue. This phosphorylation may enable SpoIIAA to act as an anti-anti-sigma factor that counteracts SpoIIAB and thus releases sigma F from inhibition. The protein is Anti-sigma F factor of Geobacillus sp. (strain WCH70).